A 180-amino-acid chain; its full sequence is Adenine phosphoribosyltransferase (180 aa).

An N-acetylserine modification is found at Ser2. Phosphoserine is present on residues Ser4, Ser15, and Ser30. Tyr60 is subject to Phosphotyrosine. Ser66 carries the phosphoserine modification. The residue at position 114 (Lys114) is an N6-acetyllysine. Thr135 carries the post-translational modification Phosphothreonine.

It belongs to the purine/pyrimidine phosphoribosyltransferase family. As to quaternary structure, homodimer.

It is found in the cytoplasm. It catalyses the reaction AMP + diphosphate = 5-phospho-alpha-D-ribose 1-diphosphate + adenine. The protein operates within purine metabolism; AMP biosynthesis via salvage pathway; AMP from adenine: step 1/1. In terms of biological role, catalyzes a salvage reaction resulting in the formation of AMP, that is energically less costly than de novo synthesis. This is Adenine phosphoribosyltransferase from Mus pahari (Gairdner's shrew-mouse).